The chain runs to 350 residues: Neuronal-specific septin-3 (350 aa).

The span at 1–10 (MSKGLPEART) shows a compositional bias: basic and acidic residues. A disordered region spans residues 1-29 (MSKGLPEARTDAAMSELVPEPRPKPAVPM). In terms of domain architecture, Septin-type G spans 58 to 331 (TGFDFNIMVV…ETYRAKRLND (274 aa)). Positions 68 to 75 (GQSGLGKS) are G1 motif. 68 to 75 (GQSGLGKS) contributes to the GTP binding site. Ser-91 carries the post-translational modification Phosphoserine. Thr-102 lines the GTP pocket. Residues 125–128 (DTPG) form a G3 motif region. The tract at residues 207–210 (AKAD) is G4 motif. GTP-binding positions include 208–216 (KADTMTLEE), Gly-265, and Arg-280. Residues 328 to 350 (RLNDNGGLPPVSVDTEESHDSNP) are disordered.

This sequence belongs to the TRAFAC class TrmE-Era-EngA-EngB-Septin-like GTPase superfamily. Septin GTPase family. Septins polymerize into heterooligomeric protein complexes that form filaments, and can associate with cellular membranes, actin filaments and microtubules. GTPase activity is required for filament formation. In terms of processing, phosphorylated by PKG on serine residues. Phosphorylated by PKG on Ser-91. As to expression, expressed in the brain including the cerebrum, hippocampus and cerebellum (at protein level).

Its subcellular location is the cytoplasm. The protein resides in the cytoskeleton. The protein localises to the synapse. Filament-forming cytoskeletal GTPase. May play a role in cytokinesis (Potential). This Mus musculus (Mouse) protein is Neuronal-specific septin-3.